A 196-amino-acid polypeptide reads, in one-letter code: Adenylate kinase (196 aa).

10–15 lines the ATP pocket; it reads GAGKGT. The tract at residues 30–59 is NMP; the sequence is STGDMLRAAVSAGTEIGKRAKAVMDAGGLV. AMP is bound by residues Thr31, Arg36, 57–59, 85–88, and Gln92; these read GLV and GYPR. Residues 126–142 are LID; that stretch reads NRVAETIAAGGTVRSDD. Arg127 is an ATP binding site. 2 residues coordinate AMP: Arg139 and Arg150. Ala178 lines the ATP pocket.

This sequence belongs to the adenylate kinase family. In terms of assembly, monomer.

The protein resides in the cytoplasm. It catalyses the reaction AMP + ATP = 2 ADP. The protein operates within purine metabolism; AMP biosynthesis via salvage pathway; AMP from ADP: step 1/1. Its function is as follows. Catalyzes the reversible transfer of the terminal phosphate group between ATP and AMP. Plays an important role in cellular energy homeostasis and in adenine nucleotide metabolism. The sequence is that of Adenylate kinase from Agrobacterium fabrum (strain C58 / ATCC 33970) (Agrobacterium tumefaciens (strain C58)).